Reading from the N-terminus, the 80-residue chain is Large ribosomal subunit protein uL24 (80 aa).

The protein belongs to the universal ribosomal protein uL24 family. Part of the 50S ribosomal subunit.

In terms of biological role, one of two assembly initiator proteins, it binds directly to the 5'-end of the 23S rRNA, where it nucleates assembly of the 50S subunit. One of the proteins that surrounds the polypeptide exit tunnel on the outside of the subunit. The protein is Large ribosomal subunit protein uL24 of Chlorobium phaeobacteroides (strain DSM 266 / SMG 266 / 2430).